The following is a 448-amino-acid chain: N-succinylarginine dihydrolase (448 aa).

Substrate is bound by residues 19 to 28, Asn-110, and 137 to 138; these read GGLSYGNVAS and HR. The active site involves Glu-174. A substrate-binding site is contributed by Arg-214. His-250 is an active-site residue. Substrate is bound by residues Asp-252 and Asn-365. Catalysis depends on Cys-371, which acts as the Nucleophile.

Belongs to the succinylarginine dihydrolase family. In terms of assembly, homodimer.

The enzyme catalyses N(2)-succinyl-L-arginine + 2 H2O + 2 H(+) = N(2)-succinyl-L-ornithine + 2 NH4(+) + CO2. The protein operates within amino-acid degradation; L-arginine degradation via AST pathway; L-glutamate and succinate from L-arginine: step 2/5. Catalyzes the hydrolysis of N(2)-succinylarginine into N(2)-succinylornithine, ammonia and CO(2). In Pseudomonas syringae pv. tomato (strain ATCC BAA-871 / DC3000), this protein is N-succinylarginine dihydrolase.